The sequence spans 140 residues: Ribosomal RNA large subunit methyltransferase H (140 aa).

S-adenosyl-L-methionine-binding positions include L58, G90, and 108–113 (LSLLTF).

It belongs to the RNA methyltransferase RlmH family. As to quaternary structure, homodimer.

It localises to the cytoplasm. It catalyses the reaction pseudouridine(1915) in 23S rRNA + S-adenosyl-L-methionine = N(3)-methylpseudouridine(1915) in 23S rRNA + S-adenosyl-L-homocysteine + H(+). Functionally, specifically methylates the pseudouridine at position 1915 (m3Psi1915) in 23S rRNA. The protein is Ribosomal RNA large subunit methyltransferase H of Protochlamydia amoebophila (strain UWE25).